Consider the following 344-residue polypeptide: Meiotic expression up-regulated protein 26 (344 aa).

It localises to the nucleus. This chain is Meiotic expression up-regulated protein 26 (meu26), found in Schizosaccharomyces pombe (strain 972 / ATCC 24843) (Fission yeast).